Here is a 124-residue protein sequence, read N- to C-terminus: MATINQLVRKPRQATTYKSASPALDKCPQRRGVCTRVYTTTPKKPNSALRKVAKVRLTNQEEVISYIGGEGHNLQEHSVVLIRGGRVKDLPGVRYHTVRGSLDAAGVAKRRQGRSKYGAKRPKS.

The tract at residues 1-25 (MATINQLVRKPRQATTYKSASPALD) is disordered. D89 bears the 3-methylthioaspartic acid mark.

Belongs to the universal ribosomal protein uS12 family. Part of the 30S ribosomal subunit. Contacts proteins S8 and S17. May interact with IF1 in the 30S initiation complex.

Its function is as follows. With S4 and S5 plays an important role in translational accuracy. In terms of biological role, interacts with and stabilizes bases of the 16S rRNA that are involved in tRNA selection in the A site and with the mRNA backbone. Located at the interface of the 30S and 50S subunits, it traverses the body of the 30S subunit contacting proteins on the other side and probably holding the rRNA structure together. The combined cluster of proteins S8, S12 and S17 appears to hold together the shoulder and platform of the 30S subunit. The protein is Small ribosomal subunit protein uS12 of Xanthomonas campestris pv. campestris (strain 8004).